Reading from the N-terminus, the 311-residue chain is Mediator of RNA polymerase II transcription subunit 27 (311 aa).

Ser132 carries the post-translational modification Phosphoserine. Lys134 carries the N6-methyllysine modification.

Belongs to the Mediator complex subunit 27 family. As to quaternary structure, component of the Mediator complex, which is composed of MED1, MED4, MED6, MED7, MED8, MED9, MED10, MED11, MED12, MED13, MED13L, MED14, MED15, MED16, MED17, MED18, MED19, MED20, MED21, MED22, MED23, MED24, MED25, MED26, MED27, MED29, MED30, MED31, CCNC, CDK8 and CDC2L6/CDK11. The MED12, MED13, CCNC and CDK8 subunits form a distinct module termed the CDK8 module. Mediator containing the CDK8 module is less active than Mediator lacking this module in supporting transcriptional activation. Individual preparations of the Mediator complex lacking one or more distinct subunits have been variously termed ARC, CRSP, DRIP, PC2, SMCC and TRAP.

The protein localises to the nucleus. In terms of biological role, component of the Mediator complex, a coactivator involved in the regulated transcription of nearly all RNA polymerase II-dependent genes. Mediator functions as a bridge to convey information from gene-specific regulatory proteins to the basal RNA polymerase II transcription machinery. Mediator is recruited to promoters by direct interactions with regulatory proteins and serves as a scaffold for the assembly of a functional preinitiation complex with RNA polymerase II and the general transcription factors. The chain is Mediator of RNA polymerase II transcription subunit 27 (MED27) from Bos taurus (Bovine).